Reading from the N-terminus, the 517-residue chain is MQLNPAEISELIKSRIEGLTVSADIRNQGTVVSVTDGIVRIHGLSDVMQGEMLEFPATADGTPTYGLALNLERDSVGSVILGEYEHIAEGDTVKCTGRILEVPVGPELLGRVVNALGQPIDGKGPINAKMTDVIEKVAPGVIARKSVDQPLQTGLKSIDSMVPVGRGQRELIIGDRQTGKTAVAIDAIINQKGKGVSCVYVAIGQKASSIKNVVRSLEQAGAMEYTIVVAASASESAAMQYVSAYSGCTMGEYFRDRGEDALIVYDDLSKQAVAYRQVSLLLRRPPGREAYPGDVFYLHSRLLERAARVNEKYVEDFTKGAVKGKTGSLTALPIIETQAGDVSAFVPTNVISITDGQIFLETSLFNAGIRPAINAGISVSRVGGAAQTKLIKNLSGGIRTDLAQYRELAAFAQFASDLDEATRKQLDRGARVTELLKQAQYSPLSISNMAATLFAVNKGFMDDVEVKKVLAFEHGLHAWLKDKNAALMAKLEANKAMDKDAEAELNTAVAAFKKAFA.

An ATP-binding site is contributed by Gly-174 to Thr-181.

It belongs to the ATPase alpha/beta chains family. F-type ATPases have 2 components, CF(1) - the catalytic core - and CF(0) - the membrane proton channel. CF(1) has five subunits: alpha(3), beta(3), gamma(1), delta(1), epsilon(1). CF(0) has three main subunits: a(1), b(2) and c(9-12). The alpha and beta chains form an alternating ring which encloses part of the gamma chain. CF(1) is attached to CF(0) by a central stalk formed by the gamma and epsilon chains, while a peripheral stalk is formed by the delta and b chains.

It is found in the cell inner membrane. It carries out the reaction ATP + H2O + 4 H(+)(in) = ADP + phosphate + 5 H(+)(out). Produces ATP from ADP in the presence of a proton gradient across the membrane. The alpha chain is a regulatory subunit. The protein is ATP synthase subunit alpha of Polaromonas sp. (strain JS666 / ATCC BAA-500).